The chain runs to 2896 residues: Hemocyanin G-type, units Oda to Odg (2896 aa).

Residues 1 to 419 (NLIRKDVDAL…ADMVVVDKTG (419 aa)) form a functional unit Oda region. Position 41 (His41) interacts with Cu cation. The cysteines at positions 47 and 57 are disulfide-linked. A cross-link (2'-(S-cysteinyl)-histidine (Cys-His)) is located at residues 58-60 (CLH). The Cu cation site is built by His60, His69, His178, His182, and His209. 2 disulfide bridges follow: Cys168–Cys234 and Cys321–Cys333. An N-linked (GlcNAc...) asparagine glycan is attached at Asn386. Residues 420-834 (LNVRKDLQSL…KESGVVFDEL (415 aa)) are functional unit Odb. His460 lines the Cu cation pocket. A disulfide bridge connects residues Cys466 and Cys477. Positions 478–480 (CVH) form a cross-link, 2'-(S-cysteinyl)-histidine (Cys-His). The Cu cation site is built by His480, His489, His601, His605, and His632. The cysteines at positions 591 and 657 are disulfide-linked. Residue Asn804 is glycosylated (N-linked (GlcNAc...) asparagine). Positions 835 to 1254 (YRSRRDVSSL…GIWVEPVTSA (420 aa)) are functional unit Odc. A Cu cation-binding site is contributed by His875. Cys881 and Cys892 are oxidised to a cystine. Residues 893–895 (CHH) constitute a cross-link (2'-(S-cysteinyl)-histidine (Cys-His)). Cu cation is bound by residues His895, His904, His1013, His1017, His1044, and His1292. A disulfide bridge connects residues Cys1003 and Cys1070. The segment at 1255–1667 (NRIRKNLNAL…ADIKSEEGNE (413 aa)) is functional unit Odd. Cys1298 and Cys1309 are joined by a disulfide. Residues 1310–1312 (CIH) constitute a cross-link (2'-(S-cysteinyl)-histidine (Cys-His)). Cu cation is bound by residues His1312, His1321, His1425, His1429, and His1456. Cys1415 and Cys1482 are joined by a disulfide. A glycan (N-linked (GlcNAc...) asparagine) is linked at Asn1496. Cysteines 1571 and 1581 form a disulfide. Asn1634 carries an N-linked (GlcNAc...) asparagine glycan. A functional unit Ode region spans residues 1668–2085 (YLVRKNVERL…NEDADIDTPL (418 aa)). Position 1708 (His1708) interacts with Cu cation. Cys1714 and Cys1725 are disulfide-bonded. The 2'-(S-cysteinyl)-histidine (Cys-His) cross-link spans 1726 to 1728 (CLH). Positions 1728, 1737, 1849, 1853, and 1880 each coordinate Cu cation. Cystine bridges form between Cys1839–Cys1906 and Cys1997–Cys2003. A glycan (N-linked (GlcNAc...) asparagine) is linked at Asn2055. The tract at residues 2086–2502 (NHIRRNVESL…REVHKKTVGD (417 aa)) is functional unit Odf. His2126 serves as a coordination point for Cu cation. An intrachain disulfide couples Cys2131 to Cys2141. Positions 2142 to 2144 (CLH) form a cross-link, 2'-(S-cysteinyl)-histidine (Cys-His). Positions 2144 and 2153 each coordinate Cu cation. An N-linked (GlcNAc...) asparagine glycan is attached at Asn2201. 2 disulfide bridges follow: Cys2252–Cys2319 and Cys2406–Cys2411. Cu cation is bound by residues His2262, His2266, and His2293. Positions 2503–2896 (AIIRKNVNSL…VFLAPAKTTH (394 aa)) are functional unit Odg. His2543 is a Cu cation binding site. Cysteines 2549 and 2559 form a disulfide. Asn2553 is a glycosylation site (N-linked (GlcNAc...) asparagine). Residues 2560–2562 (CQH) constitute a cross-link (2'-(S-cysteinyl)-histidine (Cys-His)). 5 residues coordinate Cu cation: His2562, His2571, His2671, His2675, and His2702. 2 disulfide bridges follow: Cys2661/Cys2728 and Cys2815/Cys2821.

It belongs to the tyrosinase family. Hemocyanin subfamily. As to quaternary structure, decamers of large identical subunits (350 kDa), each containing 7 globular oxygen-binding functional units: ODA, ODB, ODC, ODD, ODE, ODF, and ODG. Decamer formation requires the presence of magnesium ions. It depends on Cu(2+) as a cofactor.

Hemocyanins are copper-containing oxygen carriers occurring freely dissolved in the hemolymph of many mollusks and arthropods. The polypeptide is Hemocyanin G-type, units Oda to Odg (ODHCY) (Enteroctopus dofleini (North Pacific giant octopus)).